Here is a 71-residue protein sequence, read N- to C-terminus: Pro-MCH (71 aa).

A signal peptide spans 1–20 (AKMNLSSYILILTFSLFSQG).

It belongs to the melanin-concentrating hormone family.

The protein localises to the secreted. This chain is Pro-MCH (PMCH), found in Pan paniscus (Pygmy chimpanzee).